A 125-amino-acid chain; its full sequence is Small ribosomal subunit protein uS13 (125 aa).

Residues 93–125 (RRGLPVRGQRTKTNARTRKGPKRTVAGKKKAGR) form a disordered region.

Belongs to the universal ribosomal protein uS13 family. As to quaternary structure, part of the 30S ribosomal subunit. Forms a loose heterodimer with protein S19. Forms two bridges to the 50S subunit in the 70S ribosome.

Located at the top of the head of the 30S subunit, it contacts several helices of the 16S rRNA. In the 70S ribosome it contacts the 23S rRNA (bridge B1a) and protein L5 of the 50S subunit (bridge B1b), connecting the 2 subunits; these bridges are implicated in subunit movement. Contacts the tRNAs in the A and P-sites. This chain is Small ribosomal subunit protein uS13, found in Renibacterium salmoninarum (strain ATCC 33209 / DSM 20767 / JCM 11484 / NBRC 15589 / NCIMB 2235).